Consider the following 463-residue polypeptide: Hexose-6-phosphate:phosphate antiporter (463 aa).

Over 1–24 the chain is Cytoplasmic; it reads MLAFLNQVRKPTLDLPLEVRRKMW. Residues 25–45 form a helical membrane-spanning segment; it reads FKPFMQSYLVVFIGYLTMYLI. Over 46–60 the chain is Periplasmic; sequence RKNFNIAQNDMISTY. Residues 61–81 form a helical membrane-spanning segment; it reads GLSMTQLGMIGLGFSITYGVG. The Cytoplasmic portion of the chain corresponds to 82–96; that stretch reads KTLVSYYADGKNTKQ. A helical transmembrane segment spans residues 97–117; the sequence is FLPFMLILSAICMLGFSASMG. Topologically, residues 118–120 are periplasmic; that stretch reads SGS. Residues 121–141 form a helical membrane-spanning segment; that stretch reads VSLFLMIAFYALSGFFQSTGG. Residues 142-159 lie on the Cytoplasmic side of the membrane; that stretch reads SCSYSTITKWTPRRKRGT. The helical transmembrane segment at 160-180 threads the bilayer; the sequence is FLGFWNISHNLGGAGAAGVAL. Over 181–189 the chain is Periplasmic; that stretch reads FGANYLFDG. A helical transmembrane segment spans residues 190 to 210; sequence HVIGMFIFPSIIALIVGFIGL. Residues 211–259 are Cytoplasmic-facing; the sequence is RYGSDSPESYGLGKAEELFGEEISEEDKETESTDMTKWQIFVEYVLKNK. A helical transmembrane segment spans residues 260 to 280; the sequence is VIWLLCFANIFLYVVRIGIDQ. At 281–297 the chain is on the periplasmic side; it reads WSTVYAFQELKLSKAVA. Residues 298–318 form a helical membrane-spanning segment; the sequence is IQGFTLFEAGALVGTLLWGWL. Residues 319–326 lie on the Cytoplasmic side of the membrane; sequence SDLANGRR. Residues 327 to 347 form a helical membrane-spanning segment; it reads GLVACIALALIIATLGVYQHA. The Periplasmic portion of the chain corresponds to 348–357; it reads SNEYIYLASL. Residues 358–378 form a helical membrane-spanning segment; the sequence is FALGFLVFGPQLLIGVAAVGF. Residues 379 to 382 lie on the Cytoplasmic side of the membrane; sequence VPKK. The helical transmembrane segment at 383–403 threads the bilayer; sequence AIGAADGIKGTFAYLIGDSFA. Residues 404 to 425 lie on the Periplasmic side of the membrane; sequence KLGLGMIADGTPVFGLTGWAGT. Residues 426 to 446 traverse the membrane as a helical segment; that stretch reads FAALDIAAIGCICLMAIVAVM. The Cytoplasmic portion of the chain corresponds to 447–463; that stretch reads EERKIRREKKIQQLTVA.

It belongs to the major facilitator superfamily. Organophosphate:Pi antiporter (OPA) (TC 2.A.1.4) family.

It localises to the cell inner membrane. Its function is as follows. Mediates the exchange of external hexose 6-phosphate and internal inorganic phosphate. In Escherichia coli O157:H7, this protein is Hexose-6-phosphate:phosphate antiporter (uhpT).